Consider the following 461-residue polypeptide: MLDDTIVAIATALGEGSIGVIRMSGPDAITIGKKVFRPKYNKEWYQKDNYKIIYGHVINPETGEIIDEVLLSIMRGPKSFTAEDVIEISCHGGIIPLRKVLEVILRNGARHAEPGEFSKRSFLNGRLDLAQAESIIDIIRAKTDAGAKIAVNQLGGKLSEKVNGLQHKVLGLLAKIEAIIDFPEDDIPEENLLGISKECNSLIKEIEHLLAYADTGKIYREGLKTVIVGKPNVGKSSLLNALLHEQRAIVTDIPGTTRDVIEEILSIKGVPLKIIDTAGLRETQDLVEKIGVEKSRELLNQADIVLFVLDATTGISDEDRKVIDLIKDKKVLILINKIDITKNKIDSHEIRQLINFSEIIEISAQKEIGLDKLEETIFNMVVEGKITTTDSIFVSNSRHKHALERAMQHLLEASKGLQEYVPADLVSIDLKSSWEILGEITGNSVTEDLIDRIFSDFCIGK.

Residues R22, E87, and R126 each contribute to the (6S)-5-formyl-5,6,7,8-tetrahydrofolate site. One can recognise a TrmE-type G domain in the interval 222 to 382; that stretch reads GLKTVIVGKP…LEETIFNMVV (161 aa). Residue N232 participates in K(+) binding. Residues 232–237, 251–257, and 276–279 contribute to the GTP site; these read NVGKSS, TDIPGTT, and DTAG. Residue S236 participates in Mg(2+) binding. 3 residues coordinate K(+): T251, I253, and T256. T257 is a binding site for Mg(2+). K461 provides a ligand contact to (6S)-5-formyl-5,6,7,8-tetrahydrofolate.

Belongs to the TRAFAC class TrmE-Era-EngA-EngB-Septin-like GTPase superfamily. TrmE GTPase family. Homodimer. Heterotetramer of two MnmE and two MnmG subunits. K(+) serves as cofactor.

It is found in the cytoplasm. Functionally, exhibits a very high intrinsic GTPase hydrolysis rate. Involved in the addition of a carboxymethylaminomethyl (cmnm) group at the wobble position (U34) of certain tRNAs, forming tRNA-cmnm(5)s(2)U34. This chain is tRNA modification GTPase MnmE, found in Desulforamulus reducens (strain ATCC BAA-1160 / DSM 100696 / MI-1) (Desulfotomaculum reducens).